Consider the following 153-residue polypeptide: Movement protein (153 aa).

Disordered stretches follow at residues 1-24 and 107-153; these read MAQE…EQDP and ALSL…RNQR. 2 stretches are compositionally biased toward polar residues: residues 109 to 122 and 140 to 153; these read SLLS…NQPW and GQRQ…RNQR.

The protein belongs to the luteoviruses movement protein family.

The protein resides in the host nucleus envelope. In terms of biological role, transports viral genome to neighboring plant cells directly through plasmosdesmata, without any budding. The movement protein allows efficient cell to cell propagation, by bypassing the host cell wall barrier. Acts as a suppressor of RNA-mediated gene silencing, also known as post-transcriptional gene silencing (PTGS), a mechanism of plant viral defense that limits the accumulation of viral RNAs. The chain is Movement protein from Avena byzantina (Oat).